The chain runs to 125 residues: Large ribosomal subunit protein uL22 (125 aa).

The protein belongs to the universal ribosomal protein uL22 family. As to quaternary structure, part of the 50S ribosomal subunit.

Functionally, this protein binds specifically to 23S rRNA; its binding is stimulated by other ribosomal proteins, e.g. L4, L17, and L20. It is important during the early stages of 50S assembly. It makes multiple contacts with different domains of the 23S rRNA in the assembled 50S subunit and ribosome. In terms of biological role, the globular domain of the protein is located near the polypeptide exit tunnel on the outside of the subunit, while an extended beta-hairpin is found that lines the wall of the exit tunnel in the center of the 70S ribosome. This chain is Large ribosomal subunit protein uL22, found in Novosphingobium aromaticivorans (strain ATCC 700278 / DSM 12444 / CCUG 56034 / CIP 105152 / NBRC 16084 / F199).